The following is a 343-amino-acid chain: Photosystem II protein D1 (343 aa).

3 helical membrane-spanning segments follow: residues 28–45 (YIGWFGVLLFPLIAVSTV), 117–132 (HFLAAVLAWLGREYEY), and 141–155 (WIYLAFSAPVVAASA). His117 lines the chlorophyll a pocket. Pheophytin a is bound at residue Trp125. [CaMn4O5] cluster is bound by residues Asp169 and Glu188. The chain crosses the membrane as a helical span at residues 196-217 (FHILGVSAVFGGSLFSAMHGSL). His197 is a chlorophyll a binding site. A quinone contacts are provided by residues His214 and 263–264 (SF). Fe cation is bound at residue His214. His271 contacts Fe cation. The chain crosses the membrane as a helical span at residues 273–287 (FLAAWPVIGIWCTAI). Residues His331, Glu332, Asp341, and Ala343 each coordinate [CaMn4O5] cluster.

This sequence belongs to the reaction center PufL/M/PsbA/D family. PSII is composed of 1 copy each of membrane proteins PsbA, PsbB, PsbC, PsbD, PsbE, PsbF, PsbH, PsbI, PsbJ, PsbK, PsbL, PsbM, PsbT, PsbX, PsbY, PsbZ, Psb30/Ycf12, at least 3 peripheral proteins of the oxygen-evolving complex and a large number of cofactors. It forms dimeric complexes. It depends on The D1/D2 heterodimer binds P680, chlorophylls that are the primary electron donor of PSII, and subsequent electron acceptors. It shares a non-heme iron and each subunit binds pheophytin, quinone, additional chlorophylls, carotenoids and lipids. D1 provides most of the ligands for the Mn4-Ca-O5 cluster of the oxygen-evolving complex (OEC). There is also a Cl(-1) ion associated with D1 and D2, which is required for oxygen evolution. The PSII complex binds additional chlorophylls, carotenoids and specific lipids. as a cofactor. Post-translationally, tyr-160 forms a radical intermediate that is referred to as redox-active TyrZ, YZ or Y-Z.

The protein resides in the plastid. It is found in the chloroplast thylakoid membrane. It carries out the reaction 2 a plastoquinone + 4 hnu + 2 H2O = 2 a plastoquinol + O2. Photosystem II (PSII) is a light-driven water:plastoquinone oxidoreductase that uses light energy to abstract electrons from H(2)O, generating O(2) and a proton gradient subsequently used for ATP formation. It consists of a core antenna complex that captures photons, and an electron transfer chain that converts photonic excitation into a charge separation. The D1/D2 (PsbA/PsbD) reaction center heterodimer binds P680, the primary electron donor of PSII as well as several subsequent electron acceptors. This Prorocentrum micans (Red tide dinoflagellate) protein is Photosystem II protein D1.